Reading from the N-terminus, the 220-residue chain is Peptidyl-tRNA hydrolase (220 aa).

Position 14 (Y14) interacts with tRNA. Catalysis depends on H19, which acts as the Proton acceptor. TRNA is bound by residues F66, N68, and N114. A disordered region spans residues 184–220; sequence QAFNSTDLRPRPEPVPAPQPADVSGPQETGPAERPEV.

Belongs to the PTH family. As to quaternary structure, monomer.

It localises to the cytoplasm. It carries out the reaction an N-acyl-L-alpha-aminoacyl-tRNA + H2O = an N-acyl-L-amino acid + a tRNA + H(+). Functionally, hydrolyzes ribosome-free peptidyl-tRNAs (with 1 or more amino acids incorporated), which drop off the ribosome during protein synthesis, or as a result of ribosome stalling. Its function is as follows. Catalyzes the release of premature peptidyl moieties from peptidyl-tRNA molecules trapped in stalled 50S ribosomal subunits, and thus maintains levels of free tRNAs and 50S ribosomes. This chain is Peptidyl-tRNA hydrolase, found in Deinococcus deserti (strain DSM 17065 / CIP 109153 / LMG 22923 / VCD115).